A 204-amino-acid chain; its full sequence is Histone chaperone ASF1A (204 aa).

Residues 1–156 are interaction with histone H3, CHAF1B, and HIRA; that stretch reads MAKVQVNNVV…TRFHINWEDN (156 aa). The short motif at 31–37 is the Required for interaction with HIRA element; sequence IEDLSED. The required for interaction with HIRA stretch occupies residues 155-204; it reads DNTEKLEDAESSNPNLPSLLSTDALPSASKGWSTSENSLNVMLESHMDCM. Ser192 bears the Phosphoserine; by TLK2 mark.

The protein belongs to the ASF1 family. In terms of assembly, interacts with histone H3 (via C-terminus), including histone H3.1, H3.2 and H3.3, and histone H4; the interaction with H3 is direct. Probably interacts with the heterodimeric form of H3-H4 taking the place of the second dimer. Interacts with the CHAF1A, CHAF1B and RBBP4 subunits of the CAF-1 complex. Interacts with CABIN1, HAT1, HIRA, NASP, TAF1 and UBN1. Found in a soluble complex with NASP and histones H3 and H4; the interaction with NASP is probably indirect and mediated by H3-H4. Interacts with CDAN1. Found in a cytosolic complex with IPO4 and histones H3 and H4. Interacts with CREBBP. In terms of processing, phosphorylated by TLK1 and TLK2. Highly phosphorylated in S-phase and at lower levels in M-phase. TLK2-mediated phosphorylation at Ser-192 prevents proteasome-dependent degradation.

It is found in the nucleus. Histone chaperone that facilitates histone deposition and histone exchange and removal during nucleosome assembly and disassembly. Cooperates with chromatin assembly factor 1 (CAF-1) to promote replication-dependent chromatin assembly and with HIRA to promote replication-independent chromatin assembly. Promotes homologous recombination-mediated repair of double-strand breaks (DSBs) at stalled or collapsed replication forks: acts by mediating histone replacement at DSBs, leading to recruitment of the MMS22L-TONSL complex and subsequent loading of RAD51. Also involved in the nuclear import of the histone H3-H4 dimer together with importin-4 (IPO4): specifically recognizes and binds newly synthesized histones with the monomethylation of H3 'Lys-9' and acetylation at 'Lys-14' (H3K9me1K14ac) marks, and diacetylation at 'Lys-5' and 'Lys-12' of H4 (H4K5K12ac) marks in the cytosol. Required for the formation of senescence-associated heterochromatin foci (SAHF) and efficient senescence-associated cell cycle exit. This chain is Histone chaperone ASF1A (ASF1A), found in Bos taurus (Bovine).